Consider the following 223-residue polypeptide: uncharacterized protein (223 aa).

The signal sequence occupies residues 1–17 (MLGQGLIFISLAFVAHA). Residue Asn58 is glycosylated (N-linked (GlcNAc...) asparagine). The interval 149 to 188 (VRKKGSRPSKPQKEKQGNKQGSKTEESPNVDEDELESEPE) is disordered. Basic and acidic residues predominate over residues 159–174 (PQKEKQGNKQGSKTEE). The span at 176 to 187 (PNVDEDELESEP) shows a compositional bias: acidic residues. A helical transmembrane segment spans residues 191-211 (TFFQKYGLYLIPILFLIIMSG).

It is found in the endoplasmic reticulum membrane. This is an uncharacterized protein from Schizosaccharomyces pombe (strain 972 / ATCC 24843) (Fission yeast).